The chain runs to 406 residues: UPF0754 membrane protein CYA_0973 (406 aa).

The next 2 membrane-spanning stretches (helical) occupy residues 1-21 (MALWIYVVPPLAGLVIGYFTN) and 385-405 (IVNLGGLLGFLVGCVQVLFLL).

Belongs to the UPF0754 family.

The protein resides in the cell inner membrane. This Synechococcus sp. (strain JA-3-3Ab) (Cyanobacteria bacterium Yellowstone A-Prime) protein is UPF0754 membrane protein CYA_0973.